The primary structure comprises 345 residues: Phosphoribosylformylglycinamidine cyclo-ligase (345 aa).

Belongs to the AIR synthase family.

The protein resides in the cytoplasm. The catalysed reaction is 2-formamido-N(1)-(5-O-phospho-beta-D-ribosyl)acetamidine + ATP = 5-amino-1-(5-phospho-beta-D-ribosyl)imidazole + ADP + phosphate + H(+). The protein operates within purine metabolism; IMP biosynthesis via de novo pathway; 5-amino-1-(5-phospho-D-ribosyl)imidazole from N(2)-formyl-N(1)-(5-phospho-D-ribosyl)glycinamide: step 2/2. This Actinobacillus succinogenes (strain ATCC 55618 / DSM 22257 / CCUG 43843 / 130Z) protein is Phosphoribosylformylglycinamidine cyclo-ligase.